A 354-amino-acid polypeptide reads, in one-letter code: uncharacterized protein (354 aa).

Belongs to the band 7/mec-2 family.

The protein resides in the mitochondrion. This is an uncharacterized protein from Schizosaccharomyces pombe (strain 972 / ATCC 24843) (Fission yeast).